The following is a 466-amino-acid chain: Ribulose bisphosphate carboxylase/oxygenase activase, chloroplastic (466 aa).

A chloroplast-targeting transit peptide spans 1-48 (MAAAFSSTVGAPASTPTNFLGKKLKKQVTSAVNYHGKSSNINRFKVMA). Residue 156–163 (GGKGQGKS) participates in ATP binding. The disordered stretch occupies residues 429 to 454 (QGAQQAGNLPVPEGCTDPVAKNFDPT).

This sequence belongs to the RuBisCO activase family.

The protein resides in the plastid. It is found in the chloroplast stroma. In terms of biological role, activation of RuBisCO (ribulose-1,5-bisphosphate carboxylase/oxygenase; EC 4.1.1.39) involves the ATP-dependent carboxylation of the epsilon-amino group of lysine leading to a carbamate structure. The sequence is that of Ribulose bisphosphate carboxylase/oxygenase activase, chloroplastic (RCA) from Oryza sativa subsp. japonica (Rice).